The sequence spans 779 residues: Cysteine-rich protein 2-binding protein (779 aa).

The tract at residues 1 to 34 (MDSSIHLSGLLSRHDDDATRTSTSEGLEEGEVEG) is disordered. Ser4 carries the phosphoserine modification. Lys230 is modified (N6-acetyllysine). 3 disordered regions span residues 247-292 (SRNP…PVKF), 314-345 (LSSS…HSAT), and 360-457 (PPQA…GPRY). Residues 255–275 (MELKEKRSRTQEAKDIRRAQK) are compositionally biased toward basic and acidic residues. Ser284 is subject to Phosphoserine. The residue at position 291 (Lys291) is an N6-acetyllysine. Low complexity predominate over residues 314 to 334 (LSSSDRTPLTSPSPSPSLDFS). Basic and acidic residues-rich tracts occupy residues 402 to 423 (RAPE…RMDG) and 443 to 452 (KPPLEKDMKP). Ser413 carries the phosphoserine modification. The N-acetyltransferase domain occupies 635 to 779 (LDYCYVRPNH…KHAFFLRLRR (145 aa)).

In terms of assembly, interacts with the LIM 1 domain of CSRP2. Component of the ADA2A-containing complex (ATAC), composed of CSRP2BP, KAT2A, TADA2L, TADA3L, ZZ3, MBIP, WDR5, YEATS2, CCDC101 and DR1. In the complex, it probably interacts directly with KAT2A, MBIP and WDR5.

The protein resides in the nucleus. The protein localises to the cytoplasm. Component of the ATAC complex, a complex with histone acetyltransferase activity on histones H3 and H4. May function as a scaffold for the ATAC complex to promote ATAC complex stability. Has also weak histone acetyltransferase activity toward histone H4. Required for the normal progression through G1 and G2/M phases of the cell cycle. The protein is Cysteine-rich protein 2-binding protein of Mus musculus (Mouse).